The primary structure comprises 102 residues: Ferredoxin, 2Fe-2S (102 aa).

Residues Cys-11, Cys-24, Cys-56, and Cys-60 each coordinate [2Fe-2S] cluster.

It belongs to the 2Fe2S Shethna-type ferredoxin family. [2Fe-2S] cluster is required as a cofactor.

Its function is as follows. Ferredoxins are iron-sulfur proteins that transfer electrons in a wide variety of metabolic reactions. The protein is Ferredoxin, 2Fe-2S of Clostridium pasteurianum.